A 456-amino-acid polypeptide reads, in one-letter code: UDP-N-acetylmuramoylalanine--D-glutamate ligase (456 aa).

Residue 119–125 (GSNGKTT) coordinates ATP.

The protein belongs to the MurCDEF family.

It localises to the cytoplasm. It catalyses the reaction UDP-N-acetyl-alpha-D-muramoyl-L-alanine + D-glutamate + ATP = UDP-N-acetyl-alpha-D-muramoyl-L-alanyl-D-glutamate + ADP + phosphate + H(+). Its pathway is cell wall biogenesis; peptidoglycan biosynthesis. Functionally, cell wall formation. Catalyzes the addition of glutamate to the nucleotide precursor UDP-N-acetylmuramoyl-L-alanine (UMA). This is UDP-N-acetylmuramoylalanine--D-glutamate ligase from Limosilactobacillus reuteri (strain DSM 20016) (Lactobacillus reuteri).